The sequence spans 543 residues: Hydroxylamine reductase (543 aa).

The [4Fe-4S] cluster site is built by Cys5, Cys8, Cys17, and Cys23. Hybrid [4Fe-2O-2S] cluster is bound by residues His250, Glu274, Cys318, Cys410, Cys438, Cys463, Glu498, and Lys500. Cys410 is modified (cysteine persulfide).

Belongs to the HCP family. Requires [4Fe-4S] cluster as cofactor. Hybrid [4Fe-2O-2S] cluster serves as cofactor.

The protein localises to the cytoplasm. The enzyme catalyses A + NH4(+) + H2O = hydroxylamine + AH2 + H(+). Functionally, catalyzes the reduction of hydroxylamine to form NH(3) and H(2)O. The polypeptide is Hydroxylamine reductase (Petrotoga mobilis (strain DSM 10674 / SJ95)).